The sequence spans 66 residues: ATP synthase subunit c (66 aa).

Transmembrane regions (helical) follow at residues 3 to 23 (LTFF…GMLM) and 45 to 65 (IMGI…SFVI).

This sequence belongs to the ATPase C chain family. In terms of assembly, F-type ATPases have 2 components, F(1) - the catalytic core - and F(0) - the membrane proton channel. F(1) has five subunits: alpha(3), beta(3), gamma(1), delta(1), epsilon(1). F(0) has three main subunits: a(1), b(2) and c(10-14). The alpha and beta chains form an alternating ring which encloses part of the gamma chain. F(1) is attached to F(0) by a central stalk formed by the gamma and epsilon chains, while a peripheral stalk is formed by the delta and b chains.

The protein resides in the cell membrane. Functionally, f(1)F(0) ATP synthase produces ATP from ADP in the presence of a proton or sodium gradient. F-type ATPases consist of two structural domains, F(1) containing the extramembraneous catalytic core and F(0) containing the membrane proton channel, linked together by a central stalk and a peripheral stalk. During catalysis, ATP synthesis in the catalytic domain of F(1) is coupled via a rotary mechanism of the central stalk subunits to proton translocation. Its function is as follows. Key component of the F(0) channel; it plays a direct role in translocation across the membrane. A homomeric c-ring of between 10-14 subunits forms the central stalk rotor element with the F(1) delta and epsilon subunits. The sequence is that of ATP synthase subunit c (atpE) from Streptococcus oralis.